Here is a 109-residue protein sequence, read N- to C-terminus: Flagellar transcriptional regulator FlhD (109 aa).

It belongs to the FlhD family. In terms of assembly, homodimer; disulfide-linked. Forms a heterohexamer composed of two FlhC and four FlhD subunits. Each FlhC binds a FlhD dimer, forming a heterotrimer, and a hexamer assembles by dimerization of two heterotrimers.

The protein resides in the cytoplasm. Its function is as follows. Functions in complex with FlhC as a master transcriptional regulator that regulates transcription of several flagellar and non-flagellar operons by binding to their promoter region. Activates expression of class 2 flagellar genes, including fliA, which is a flagellum-specific sigma factor that turns on the class 3 genes. Also regulates genes whose products function in a variety of physiological pathways. In Acidovorax sp. (strain JS42), this protein is Flagellar transcriptional regulator FlhD.